Here is a 492-residue protein sequence, read N- to C-terminus: N-succinylglutamate 5-semialdehyde dehydrogenase (492 aa).

An NAD(+)-binding site is contributed by 225-230; the sequence is GSSNTG. Residues Glu248 and Cys282 contribute to the active site.

The protein belongs to the aldehyde dehydrogenase family. AstD subfamily.

It catalyses the reaction N-succinyl-L-glutamate 5-semialdehyde + NAD(+) + H2O = N-succinyl-L-glutamate + NADH + 2 H(+). The protein operates within amino-acid degradation; L-arginine degradation via AST pathway; L-glutamate and succinate from L-arginine: step 4/5. In terms of biological role, catalyzes the NAD-dependent reduction of succinylglutamate semialdehyde into succinylglutamate. This Colwellia psychrerythraea (strain 34H / ATCC BAA-681) (Vibrio psychroerythus) protein is N-succinylglutamate 5-semialdehyde dehydrogenase.